We begin with the raw amino-acid sequence, 1187 residues long: Metabotropic glutamate receptor-like protein Q (1187 aa).

The Extracellular segment spans residues 1–735 (MRLFFKFFYL…TIETSNIAKT (735 aa)). N-linked (GlcNAc...) asparagine glycosylation is found at N35, N44, N55, N177, N258, N275, N397, N402, N462, N526, N527, N557, N562, and N684. Residues 736–756 (VMIITTSILVLLILLCFGITI) traverse the membrane as a helical segment. Residues 757-768 (AYSKEKVINFGN) lie on the Cytoplasmic side of the membrane. Residues 769–789 (IVFLILMLFSCLFLCIIIYVS) form a helical membrane-spanning segment. Residues 790-796 (IEPTNFS) are Extracellular-facing. N794 is a glycosylation site (N-linked (GlcNAc...) asparagine). Residues 797 to 817 (CQFSAIVFPIGIGILFTLTLL) form a helical membrane-spanning segment. The Cytoplasmic portion of the chain corresponds to 818-843 (KQYKIYKLFKYSDFLKINTDNLKMVK). The helical transmembrane segment at 844-864 (YAGLIMVPVFLLVLIGVIVYP) threads the bilayer. Residues 865-888 (SKPTFILDLHTKTATKYCISRKYY) lie on the Extracellular side of the membrane. A helical membrane pass occupies residues 889–909 (VFSIVIVVYEVIILLTSCFIA). The Cytoplasmic portion of the chain corresponds to 910–925 (MKSKRYHSTPGTFYES). The helical transmembrane segment at 926-946 (LFNSILIYNYTLVFIVLIPLF) threads the bilayer. Topologically, residues 947–955 (YTLQNNPTT) are extracellular. A helical transmembrane segment spans residues 956–976 (IYLIYSIGSSILVFATLSIIF). The Cytoplasmic segment spans residues 977 to 1095 (IPKINFLFRR…SPSSQSIDFL (119 aa)). Positions 1074 to 1105 (IYPNQIPKQTTNSPSSQSIDFLNNPTIPKNKS) are enriched in polar residues. Residues 1074 to 1187 (IYPNQIPKQT…RKSMDPSLDS (114 aa)) form a disordered region. The span at 1114–1124 (KKPKKKLKSKI) shows a compositional bias: basic residues. A compositionally biased stretch (low complexity) spans 1125-1174 (ISKSANSSPNINNNTINNNNNNNNNNNNNNNNNNNNNNINNNNNNNININ).

This sequence belongs to the G-protein coupled receptor 3 family. GABA-B receptor subfamily.

The protein localises to the membrane. In Dictyostelium discoideum (Social amoeba), this protein is Metabotropic glutamate receptor-like protein Q (grlQ).